Reading from the N-terminus, the 480-residue chain is Glycogen synthase (480 aa).

Residue lysine 15 participates in ADP-alpha-D-glucose binding.

This sequence belongs to the glycosyltransferase 1 family. Bacterial/plant glycogen synthase subfamily.

It carries out the reaction [(1-&gt;4)-alpha-D-glucosyl](n) + ADP-alpha-D-glucose = [(1-&gt;4)-alpha-D-glucosyl](n+1) + ADP + H(+). It functions in the pathway glycan biosynthesis; glycogen biosynthesis. In terms of biological role, synthesizes alpha-1,4-glucan chains using ADP-glucose. This is Glycogen synthase from Pasteurella multocida (strain Pm70).